The sequence spans 346 residues: Queuosine 5'-phosphate N-glycosylase/hydrolase (346 aa).

Residues His-49, Phe-243, Asp-245, Asp-310, and Asp-315 each contribute to the queuine site. Asp-245 serves as the catalytic Nucleophile or transition state stabilizer.

It belongs to the QNG1 protein family.

The catalysed reaction is queuosine 5'-phosphate + H2O = queuine + D-ribose 5-phosphate. In terms of biological role, catalyzes the hydrolysis of queuosine 5'-phosphate, releasing the nucleobase queuine (q). Is required for salvage of queuine from exogenous queuosine (Q) that is imported and then converted to queuosine 5'-phosphate intracellularly. The polypeptide is Queuosine 5'-phosphate N-glycosylase/hydrolase (Schizosaccharomyces pombe (strain 972 / ATCC 24843) (Fission yeast)).